A 384-amino-acid chain; its full sequence is Polyketide synthase BAS (384 aa).

The active-site Nucleophile and monoketide coumarate intermediate is the Cys-157. An S-(4-hydroxycinnamyl)cysteine modification is found at Cys-157.

The protein belongs to the thiolase-like superfamily. Chalcone/stilbene synthases family. As to quaternary structure, homodimer.

It carries out the reaction 4-coumaroyl-CoA + malonyl-CoA + H2O + H(+) = 4-hydroxybenzalacetone + 2 CO2 + 2 CoA. The protein operates within secondary metabolite biosynthesis; flavonoid biosynthesis. Functionally, polyketide synthase producing 4-hydroxybenzalacetone. Can use p-coumaryl-CoA as substrate but does not accept hexanoyl-CoA, isobutyryl-CoA, isovaleryl-CoA, and acetyl-CoA as a substrates. Catalyzes the initial key reaction step in the biosynthesis of phenylbutanoids. This is Polyketide synthase BAS (BAS) from Rheum palmatum (Chinese rhubarb).